The following is a 557-amino-acid chain: MAVQTDIEIARAARKKPIQEIGAGLGIPAEALIPYGHDKAKVGQGFIRGLEGRPDGKLILVTAINPTPAGEGKTTTTVGLGDGLNRIGKKAVICIREASLGPNFGMKGGAAGGGRAQVVPMEDMNLHFTGDFHAITAAHNLLAAMIDNHIYWGNALELDARRITWRRVMDMNDRALRDTVVNLGGVANGFPRQTGFDITVASEVMAILCLADDLEDLERRLGRIVVGYRRDKSPVYCRDLKAAGAMAVLLKDAMQPNLVQTIENNPAFVHGGPFANIAHGCNSVIATRTALKLADYVVTEAGFGADLGAEKFFDIKCRLAGLKPSAAVVVATVRALKMNGGVAREDLGREDVAALRRGCANLGRHIANVKGFGVPVVVAINHFTTDTEAEIEAVRAYAAGQGAEAFLCRHWAEGSAGIEDLAQKVVELAEAPSMFAPLYPDDMPLFEKMETVARRIYHAHDVIADHVIRDQLRTWEEAGYGALPVCMAKTQYSFTTDAAIRGAPEGHSIPIREVRLAAGAGFVVAICGEIRTMPGLPSQPAAELIHLDEEGRIEGLF.

Residue 67 to 74 (TPAGEGKT) coordinates ATP.

The protein belongs to the formate--tetrahydrofolate ligase family.

It catalyses the reaction (6S)-5,6,7,8-tetrahydrofolate + formate + ATP = (6R)-10-formyltetrahydrofolate + ADP + phosphate. It participates in one-carbon metabolism; tetrahydrofolate interconversion. This is Formate--tetrahydrofolate ligase from Cereibacter sphaeroides (strain KD131 / KCTC 12085) (Rhodobacter sphaeroides).